Consider the following 498-residue polypeptide: Early growth response protein 1 (498 aa).

Disordered stretches follow at residues 137–203 (NASP…TASI) and 287–308 (PSRM…RPYA). Residues 139-163 (SPSSAPSSSPSSSSSSSQSPPLSCS) are compositionally biased toward low complexity. Over residues 179–202 (FPNSSPELFPDQSPQPFQNASTAS) the composition is skewed to polar residues. 3 consecutive C2H2-type zinc fingers follow at residues 307–331 (YACP…IRIH), 337–359 (FQCR…IRTH), and 365–387 (FACD…TKIH). The tract at residues 378–422 (DERKRHTKIHLRQKDKKADKATPVSVASPVSSYSPSASTSYPSPV) is disordered. Over residues 382 to 392 (RHTKIHLRQKD) the composition is skewed to basic residues. A compositionally biased stretch (low complexity) spans 398–422 (ATPVSVASPVSSYSPSASTSYPSPV).

It belongs to the EGR C2H2-type zinc-finger protein family.

The protein resides in the nucleus. It is found in the cytoplasm. In terms of biological role, transcriptional regulator. Recognizes and binds to the DNA sequence 5'-GCG(T/G)GGGCG-3'(EGR-site) in the promoter region of target genes. Binds double-stranded target DNA, irrespective of the cytosine methylation status. Regulates the transcription of numerous target genes, and thereby plays an important role in regulating the response to growth factors, DNA damage, and ischemia. Plays a role in the regulation of cell survival, proliferation and cell death. Mediates responses to ischemia and hypoxia; regulates the expression of proteins that are involved in inflammatory processes. Plays a role in regulating the expression of circadian clock genes. The polypeptide is Early growth response protein 1 (Xenopus tropicalis (Western clawed frog)).